The primary structure comprises 254 residues: RING-H2 finger protein ATL28 (254 aa).

A helical transmembrane segment spans residues 25–45; it reads VVLTGVLLFVIFAGFFSLFLW. The RING-type; atypical zinc finger occupies 103-145; that stretch reads CAICLSEFSDEDTVRLITVCRHPFHSNCIDLWFELHKTCPVCR.

It belongs to the RING-type zinc finger family. ATL subfamily.

The protein resides in the membrane. It catalyses the reaction S-ubiquitinyl-[E2 ubiquitin-conjugating enzyme]-L-cysteine + [acceptor protein]-L-lysine = [E2 ubiquitin-conjugating enzyme]-L-cysteine + N(6)-ubiquitinyl-[acceptor protein]-L-lysine.. Its pathway is protein modification; protein ubiquitination. The protein is RING-H2 finger protein ATL28 (ATL28) of Arabidopsis thaliana (Mouse-ear cress).